The primary structure comprises 662 residues: Eukaryotic peptide chain release factor GTP-binding subunit (662 aa).

The interval 1–220 (MASNQPNNGE…PATVTEDATD (220 aa)) is disordered. The span at 26–40 (AKAPTFTPKAAPFIP) shows a compositional bias: low complexity. Residues 62–89 (YTGQGQNSNSPHPTKSYQQYYQKPTGNT) are compositionally biased toward polar residues. Over residues 91-102 (DEDKSRVPDFSK) the composition is skewed to basic and acidic residues. Over residues 122–134 (GGNTSAPKSTKPI) the composition is skewed to polar residues. Low complexity predominate over residues 141 to 158 (TKAPTTTKPAAPAAQSKT). A Phosphothreonine modification is found at Thr182. Residues 192–213 (AKTPSAPAAALKKAAEAAEPAT) show a composition bias toward low complexity. The tr-type G domain occupies 236-464 (KEHVNIVFIG…LDSMTHLERK (229 aa)). The G1 stretch occupies residues 245–252 (GHVDAGKS). Residue 245–252 (GHVDAGKS) coordinates GTP. Residues 301 to 305 (GKTVE) form a G2 region. The interval 322-325 (DAPG) is G3. GTP contacts are provided by residues 384 to 387 (NKMD) and 428 to 429 (AY). Residues 384–387 (NKMD) are G4. Residues 427–429 (SAY) form a G5 region. Ser539 is modified (phosphoserine).

Belongs to the TRAFAC class translation factor GTPase superfamily. Classic translation factor GTPase family. ERF3 subfamily. In terms of assembly, component of the eRF1-eRF3-GTP ternary complex, composed of sup45/eRF1, sup35/eRF3 and GTP.

It is found in the cytoplasm. The enzyme catalyses GTP + H2O = GDP + phosphate + H(+). Its function is as follows. GTPase component of the eRF1-eRF3-GTP ternary complex, a ternary complex that mediates translation termination in response to the termination codons. Sup35/eRF3 mediates sup45/ERF1 delivery to stop codons: The eRF1-eRF3-GTP complex binds to a stop codon in the ribosomal A-site. GTP hydrolysis by sup35/eRF3 induces a conformational change that leads to its dissociation, permitting sup45/eRF1 to accommodate fully in the A-site. The protein is Eukaryotic peptide chain release factor GTP-binding subunit (sup35) of Schizosaccharomyces pombe (strain 972 / ATCC 24843) (Fission yeast).